The primary structure comprises 213 residues: Probable thiopurine S-methyltransferase (213 aa).

S-adenosyl-L-methionine is bound by residues W10, L45, E66, and R125.

This sequence belongs to the class I-like SAM-binding methyltransferase superfamily. TPMT family.

The protein localises to the cytoplasm. The catalysed reaction is S-adenosyl-L-methionine + a thiopurine = S-adenosyl-L-homocysteine + a thiopurine S-methylether.. The polypeptide is Probable thiopurine S-methyltransferase (Yarrowia lipolytica (strain CLIB 122 / E 150) (Yeast)).